A 506-amino-acid chain; its full sequence is Dolabradiene monooxygenase (506 aa).

Residues V5–L25 form a helical membrane-spanning segment. C443 provides a ligand contact to heme.

The protein belongs to the cytochrome P450 family. Heme serves as cofactor.

Its subcellular location is the membrane. It catalyses the reaction dolabradiene + reduced [NADPH--hemoprotein reductase] + O2 = 15,16-epoxydolabrene + oxidized [NADPH--hemoprotein reductase] + H2O + H(+). It carries out the reaction 15,16-epoxydolabrene + reduced [NADPH--hemoprotein reductase] + O2 = 3beta-hydroxy-15,16-epoxydolabrene + oxidized [NADPH--hemoprotein reductase] + H2O + H(+). Involved in the production of antifungal dolabralexin phytoalexins in response to biotic and abiotic stresses. Catalyzes the epoxidation of dolabradiene at C-16, followed by hydroxylation at C-3, to yield the epoxides 15,16-epoxydolabrene (epoxydolabrene) and 3b-hydroxy-15,16-epoxydolabrene (epoxydolabranol). The polypeptide is Dolabradiene monooxygenase (Zea mays (Maize)).